A 145-amino-acid chain; its full sequence is Transcription antitermination protein NusB (145 aa).

It belongs to the NusB family.

Involved in transcription antitermination. Required for transcription of ribosomal RNA (rRNA) genes. Binds specifically to the boxA antiterminator sequence of the ribosomal RNA (rrn) operons. In Citrifermentans bemidjiense (strain ATCC BAA-1014 / DSM 16622 / JCM 12645 / Bem) (Geobacter bemidjiensis), this protein is Transcription antitermination protein NusB.